We begin with the raw amino-acid sequence, 1120 residues long: Transcription-repair-coupling factor (1120 aa).

Residues 591 to 756 (DLSNGMLMDR…MTGLKELSII (166 aa)) form the Helicase ATP-binding domain. An ATP-binding site is contributed by 604 to 611 (GDVGFGKT). The short motif at 709 to 712 (DEEQ) is the DEEQ box element. One can recognise a Helicase C-terminal domain in the interval 777–931 (IIRDALLHEH…GFTIASHDMD (155 aa)).

The protein in the N-terminal section; belongs to the UvrB family. In the C-terminal section; belongs to the helicase family. RecG subfamily.

It is found in the cytoplasm. In terms of biological role, couples transcription and DNA repair by recognizing RNA polymerase (RNAP) stalled at DNA lesions. Mediates ATP-dependent release of RNAP and its truncated transcript from the DNA, and recruitment of nucleotide excision repair machinery to the damaged site. The protein is Transcription-repair-coupling factor of Rickettsia bellii (strain RML369-C).